The primary structure comprises 425 residues: Protein translocase subunit SecY (425 aa).

Transmembrane regions (helical) follow at residues 15–35 (LLSL…VPGI), 62–82 (TVVV…SIIM), 113–131 (LLTL…FYLK), 139–159 (LVLA…VLWL), 168–188 (LGNG…PGFV), 201–221 (IGSW…IVLL), 266–286 (PIIL…LGLL), 304–324 (IIYW…YSTI), 364–384 (LLGA…QAIL), and 385–405 (SLSG…GVIL).

It belongs to the SecY/SEC61-alpha family. In terms of assembly, component of the plastid Sec protein translocase complex, which is composed of at least SecY, SecE and SecG.

Its subcellular location is the plastid. It localises to the chloroplast thylakoid membrane. Its function is as follows. The central subunit of the protein translocation channel SecYE. Consists of two halves formed by TMs 1-5 and 6-10. These two domains form a lateral gate at the front which open onto the bilayer between TMs 2 and 7, and are clamped together by SecE at the back. The channel is closed by both a pore ring composed of hydrophobic SecY resides and a short helix (helix 2A) on the extracellular side of the membrane which forms a plug. The sequence is that of Protein translocase subunit SecY from Trieres chinensis (Marine centric diatom).